The following is a 70-amino-acid chain: Putative peptide YY-3 (70 aa).

The signal sequence occupies residues Met1–Gly23.

It belongs to the NPY family.

The protein localises to the secreted. In Homo sapiens (Human), this protein is Putative peptide YY-3 (PYY3).